We begin with the raw amino-acid sequence, 190 residues long: dTTP/UTP pyrophosphatase (190 aa).

The active-site Proton acceptor is Asp71.

It belongs to the Maf family. YhdE subfamily. A divalent metal cation is required as a cofactor.

Its subcellular location is the cytoplasm. It catalyses the reaction dTTP + H2O = dTMP + diphosphate + H(+). It carries out the reaction UTP + H2O = UMP + diphosphate + H(+). In terms of biological role, nucleoside triphosphate pyrophosphatase that hydrolyzes dTTP and UTP. May have a dual role in cell division arrest and in preventing the incorporation of modified nucleotides into cellular nucleic acids. This Xanthomonas campestris pv. campestris (strain ATCC 33913 / DSM 3586 / NCPPB 528 / LMG 568 / P 25) protein is dTTP/UTP pyrophosphatase.